Here is a 197-residue protein sequence, read N- to C-terminus: Chromophore lyase CpcT/CpeT (197 aa).

It belongs to the CpcT/CpeT biliprotein lyase family.

Functionally, covalently attaches a chromophore to Cys residue(s) of phycobiliproteins. This is Chromophore lyase CpcT/CpeT from Synechococcus sp. (strain WH8103).